Here is a 707-residue protein sequence, read N- to C-terminus: Golgin candidate 1 (707 aa).

The Cytoplasmic segment spans residues methionine 1–proline 664. Disordered stretches follow at residues valine 22 to proline 106, valine 121 to aspartate 196, and glutamine 234 to threonine 256. Low complexity predominate over residues serine 38–arginine 47. The segment covering valine 56 to serine 67 has biased composition (basic and acidic residues). A compositionally biased stretch (polar residues) spans glycine 68–valine 80. Residues serine 83 to serine 95 show a composition bias toward low complexity. Composition is skewed to basic and acidic residues over residues aspartate 139–glycine 150, threonine 185–aspartate 196, and leucine 245–aspartate 254. Coiled coils occupy residues arginine 287–lysine 424 and alanine 452–valine 608. Residues isoleucine 665–isoleucine 685 traverse the membrane as a helical; Signal-anchor for type II membrane protein segment. The Lumenal portion of the chain corresponds to histidine 686–leucine 707.

The protein resides in the golgi apparatus membrane. Golgi matrix protein playing a role in tethering of vesicles to Golgi membranes and in maintaining the overall structure of the Golgi apparatus. This chain is Golgin candidate 1 (GC1), found in Arabidopsis thaliana (Mouse-ear cress).